A 1113-amino-acid chain; its full sequence is Myosin-binding protein 1 (1113 aa).

Residues 12–34 traverse the membrane as a helical segment; that stretch reads LAFNEWLLMFMLFVNSIFSYVIA. Positions 209-229 are disordered; that stretch reads ESEAVFSDTEPKQESSLNHLP. The GTD-binding domain maps to 888–986; the sequence is SEGDRLKRQV…DLEAEIEYFR (99 aa).

In terms of assembly, interacts with myosin XI-K, XI-I and XI-1. As to expression, expressed in leaf epidermal cells, roots and root hairs.

It localises to the endomembrane system. Functionally, membrane-anchored myosin receptors that define a distinct, plant-specific transport vesicle compartment. This Arabidopsis thaliana (Mouse-ear cress) protein is Myosin-binding protein 1.